Consider the following 521-residue polypeptide: U4/U6 small nuclear ribonucleoprotein Prp4 (521 aa).

Lys-26 is modified (N6-acetyllysine). WD repeat units follow at residues Gly-228–Thr-267, Gly-270–Asp-317, Gly-320–His-359, Gly-362–Phe-401, Gly-404–Thr-443, Ala-446–Thr-486, and Gly-489–Glu-521.

In terms of assembly, component of the precatalytic spliceosome (spliceosome B complex). Component of the U4/U6-U5 tri-snRNP complex, a building block of the precatalytic spliceosome (spliceosome B complex). The U4/U6-U5 tri-snRNP complex is composed of the U4, U6 and U5 snRNAs and at least PRPF3, PRPF4, PRPF6, PRPF8, PRPF31, SNRNP200, TXNL4A, SNRNP40, SNRPB, SNRPD1, SNRPD2, SNRPD3, SNRPE, SNRPF, SNRPG, DDX23, CD2BP2, PPIH, SNU13, EFTUD2, SART1 and USP39, plus LSM2, LSM3, LSM4, LSM5, LSM6, LSM7 and LSM8. Interacts directly with PRPF18, PPIH and PRPF3. Part of a heteromeric complex containing PPIH, PRPF3 and PRPF4 that is stable in the absence of RNA. Interacts with ERCC6.

The protein localises to the nucleus. It is found in the nucleus speckle. Its function is as follows. Plays a role in pre-mRNA splicing as component of the U4/U6-U5 tri-snRNP complex that is involved in spliceosome assembly, and as component of the precatalytic spliceosome (spliceosome B complex). This chain is U4/U6 small nuclear ribonucleoprotein Prp4 (Prpf4), found in Mus musculus (Mouse).